The following is a 506-amino-acid chain: Glutamate--tRNA ligase (506 aa).

A 'HIGH' region motif is present at residues P12 to T22. Positions K253–R257 match the 'KMSKS' region motif. K256 is an ATP binding site.

Belongs to the class-I aminoacyl-tRNA synthetase family. Glutamate--tRNA ligase type 1 subfamily. In terms of assembly, monomer.

The protein localises to the cytoplasm. It carries out the reaction tRNA(Glu) + L-glutamate + ATP = L-glutamyl-tRNA(Glu) + AMP + diphosphate. In terms of biological role, catalyzes the attachment of glutamate to tRNA(Glu) in a two-step reaction: glutamate is first activated by ATP to form Glu-AMP and then transferred to the acceptor end of tRNA(Glu). The chain is Glutamate--tRNA ligase from Chlamydia trachomatis serovar A (strain ATCC VR-571B / DSM 19440 / HAR-13).